The following is a 658-amino-acid chain: Zinc finger protein 135 (658 aa).

The KRAB domain maps to 14 to 85 (VTFEDVVVGF…ESRLPQGVYP (72 aa)). Positions 171 to 196 (LNPDLPHQPMTPERQSPHTWGTRGKR) are disordered. 16 C2H2-type zinc fingers span residues 214–236 (YKCQ…HRTH), 242–264 (YECH…QRIH), 270–292 (YKCT…QRTH), 298–320 (YECS…ERTH), 326–348 (YECS…LRIH), 354–376 (YQCG…QRIH), 382–404 (YECH…QRTH), 410–432 (YECG…RRIH), 438–460 (YGCN…ERTH), 466–488 (YECS…QRIH), 494–516 (YECN…QRIH), 522–544 (YECN…QRIH), 550–572 (YECN…QRIH), 578–600 (YGCN…ERTH), 606–628 (YECH…RRIH), and 634–656 (YACR…QRTH).

Belongs to the krueppel C2H2-type zinc-finger protein family.

The protein localises to the nucleus. Its function is as follows. Plays a role in the regulation of cell morphology and cytoskeletal organization. May be involved in transcriptional regulation. In Homo sapiens (Human), this protein is Zinc finger protein 135 (ZNF135).